Here is a 201-residue protein sequence, read N- to C-terminus: 3-isopropylmalate dehydratase small subunit (201 aa).

It belongs to the LeuD family. LeuD type 1 subfamily. In terms of assembly, heterodimer of LeuC and LeuD.

It catalyses the reaction (2R,3S)-3-isopropylmalate = (2S)-2-isopropylmalate. Its pathway is amino-acid biosynthesis; L-leucine biosynthesis; L-leucine from 3-methyl-2-oxobutanoate: step 2/4. Catalyzes the isomerization between 2-isopropylmalate and 3-isopropylmalate, via the formation of 2-isopropylmaleate. The polypeptide is 3-isopropylmalate dehydratase small subunit (Thermus thermophilus (strain ATCC BAA-163 / DSM 7039 / HB27)).